Reading from the N-terminus, the 229-residue chain is UPF0173 metal-dependent hydrolase Hbut_0886 (229 aa).

This sequence belongs to the UPF0173 family.

The chain is UPF0173 metal-dependent hydrolase Hbut_0886 from Hyperthermus butylicus (strain DSM 5456 / JCM 9403 / PLM1-5).